A 434-amino-acid polypeptide reads, in one-letter code: MTVASQSIEEFKECLYHMQETRKLLTMQLLATGKITSAEIQILKRTLEEMQDERTTDFYIRHIHSRGATFAINIRDEILGLKKDFLFLENFASECESEESFTNRLKLCDLPGLLSNNQIDIRLMNGFAEEVAKCKEFLMDLITIESDGIKPLFITDWDGTMKDYCSQYATNLQPAYSAIVMGVFARNFTRAFAVLTAGPLRHPGILDLTSLPIDGPVMFSGSWGREWWLGGRRVVHDDGIPEEGSVAIGQLYEQLEEILHEGEFVQFALVGSGVQKKVDRLTLGVQTVFGQVPKELSAKYIDAVKERIHRVDPNSQYLILENCSPLEIEVCVHSSGAIWNKGDGVAALVEFNKDSLKLGKVCVAGDTTSDLPMLQKAAQENPTQVRALFVNVNKEIQSTINKIVGDSSRTCFISCPDVAHAAFAQIIIELTQNA.

Residues aspartate 156 and aspartate 158 each contribute to the Mg(2+) site. Aspartate 158 (proton donor/acceptor) is an active-site residue. 275 to 277 (QKK) is a substrate binding site. Aspartate 366 lines the Mg(2+) pocket.

This sequence belongs to the gob-1 trehalose phosphatase family. It depends on Mg(2+) as a cofactor.

The catalysed reaction is alpha,alpha-trehalose 6-phosphate + H2O = alpha,alpha-trehalose + phosphate. Catalyzes the hydrolysis of trehalose 6-phosphate to trehalose and phosphate; prevents the accumulation of toxic levels of trehalose 6-phosphate. This chain is Trehalose-phosphatase (gob-1), found in Caenorhabditis briggsae.